Consider the following 190-residue polypeptide: MTEIVKVREQLQISLSDFQEQASLQSGQIFVVGCSTSEVLGERIGTSGTMEVAEAIFSELKQFQEQTGIELAFQCCEHLNRALVVERELAMKYQFEIVTVTPVRSAGGALATYAYHNLKDPVVIEFIKADAGMDIGDTFIGMHLKHVAVPVRTSVKEIGSAHVTMATTRGKLIGGARAVYAAKEETITCR.

It belongs to the UPF0340 family.

The polypeptide is UPF0340 protein BT9727_4999 (Bacillus thuringiensis subsp. konkukian (strain 97-27)).